The chain runs to 540 residues: Berberine bridge enzyme-like 16 (540 aa).

An N-terminal signal peptide occupies residues Met-1–Ser-24. A disulfide bond links Cys-38 and Cys-101. A glycan (N-linked (GlcNAc...) asparagine) is linked at Asn-59. One can recognise an FAD-binding PCMH-type domain in the interval Ser-79–Val-254. Positions His-116 to Cys-178 form a cross-link, 6-(S-cysteinyl)-8alpha-(pros-histidyl)-FAD (His-Cys). Residues Asn-325 and Asn-496 are each glycosylated (N-linked (GlcNAc...) asparagine).

This sequence belongs to the oxygen-dependent FAD-linked oxidoreductase family. FAD is required as a cofactor. Post-translationally, the FAD cofactor is bound via a bicovalent 6-S-cysteinyl, 8alpha-N1-histidyl FAD linkage.

It is found in the secreted. The protein localises to the cell wall. In Arabidopsis thaliana (Mouse-ear cress), this protein is Berberine bridge enzyme-like 16.